The primary structure comprises 443 residues: Phosphatidate cytidylyltransferase 2 (443 aa).

Positions 1-38 (MTELRQRAVREDAPPEDKESESEAKLDGETASDSESRA) are enriched in basic and acidic residues. A disordered region spans residues 1 to 51 (MTELRQRAVREDAPPEDKESESEAKLDGETASDSESRAETAPPPTSIDDTP). S20 bears the Phosphoserine mark. Phosphothreonine is present on T30. Residues S32, S34, and S36 each carry the phosphoserine modification. T50 is modified (phosphothreonine). 6 helical membrane passes run 78 to 98 (MIAF…MIVM), 129 to 149 (WYFL…DYFF), 165 to 185 (HRFI…LSLV), 212 to 232 (LVIH…SCVI), 261 to 281 (GFIG…YVMS), and 338 to 358 (SALS…ASGF).

The protein belongs to the CDS family. As to quaternary structure, homodimer.

It is found in the endoplasmic reticulum membrane. The enzyme catalyses a 1,2-diacyl-sn-glycero-3-phosphate + CTP + H(+) = a CDP-1,2-diacyl-sn-glycerol + diphosphate. It carries out the reaction 1-octadecanoyl-2-(5Z,8Z,11Z,14Z-eicosatetraenoyl)-sn-glycero-3-phosphate + CTP + H(+) = 1-octadecanoyl-2-(5Z,8Z,11Z,14Z-eicosatetraenoyl)-sn-glycero-3-cytidine-5'-diphosphate + diphosphate. It catalyses the reaction 1-octadecanoyl-2-(9Z,12Z-octadecadienoyl)-sn-glycero-3-phosphate + CTP + H(+) = 1-octadecanoyl-2-(9Z,12Z-octadecadienoyl)-sn-glycero-3-cytidine-5'-diphosphate + diphosphate. The catalysed reaction is 1-hexadecanoyl-2-(5Z,8Z,11Z,14Z-eicosatetraenoyl)-sn-glycero-3-phosphate + CTP + H(+) = 1-hexadecanoyl-2-(5Z,8Z,11Z,14Z-eicosatetraenoyl)-sn-glycero-3-cytidine-5'-diphosphate + diphosphate. The enzyme catalyses 1,2-di-(5Z,8Z,11Z,14Z)-eicosatetraenoyl-sn-glycero-3-phosphate + CTP + H(+) = 1,2-di-(5Z,8Z,11Z,14Z-eicosatetraenoyl)-sn-glycero-3-cytidine-5'-diphosphate + diphosphate. It carries out the reaction 1-octadecanoyl-2-(9Z-octadecenoyl)-sn-glycero-3-phosphate + CTP + H(+) = 1-octadecanoyl-2-(9Z-octadecenoyl)-sn-glycero-3-cytidine-5'-diphosphate + diphosphate. It catalyses the reaction 1-octadecanoyl-2-(4Z,7Z,10Z,13Z,16Z,19Z-docosahexaenoyl)-sn-glycero-3-phosphate + CTP + H(+) = 1-octadecanoyl-2-(4Z,7Z,10Z,13Z,16Z,19Z-docosahexaenoyl)-sn-glycero-3-cytidine-5'-diphosphate + diphosphate. The catalysed reaction is 1,2-di-(9Z,12Z-octadecadienoyl)-sn-glycero-3-phosphate + CTP + H(+) = 1,2-di-(9Z,12Z-octadecadienoyl)-sn-glycero-3-cytidine-5'-diphosphate + diphosphate. The enzyme catalyses 1,2-di-(9Z-octadecenoyl)-sn-glycero-3-phosphate + CTP + H(+) = 1,2-di-(9Z-octadecenoyl)-sn-glycero-3-cytidine-5'-diphosphate + diphosphate. It participates in phospholipid metabolism; CDP-diacylglycerol biosynthesis; CDP-diacylglycerol from sn-glycerol 3-phosphate: step 3/3. In terms of biological role, catalyzes the conversion of phosphatidic acid (PA) to CDP-diacylglycerol (CDP-DAG), an essential intermediate in the synthesis of phosphatidylglycerol, cardiolipin and phosphatidylinositol. Exhibits specificity for the nature of the acyl chains at the sn-1 and sn-2 positions in the substrate, PA and the preferred acyl chain composition is 1-stearoyl-2-arachidonoyl-sn-phosphatidic acid. Plays an important role in regulating the growth and maturation of lipid droplets which are storage organelles at the center of lipid and energy homeostasis. This is Phosphatidate cytidylyltransferase 2 from Rattus norvegicus (Rat).